A 502-amino-acid chain; its full sequence is Nostrin (502 aa).

The F-BAR domain maps to methionine 1 to aspartate 260. Position 114 is a phosphoserine (serine 114). Coiled-coil stretches lie at residues serine 160–tyrosine 230 and lysine 305–serine 335. The region spanning proline 292–aspartate 372 is the REM-1 domain. The interval lysine 413–glutamine 437 is disordered. Low complexity predominate over residues glutamine 423–glutamine 437. Residues glycine 438–proline 497 enclose the SH3 domain. A Phosphoserine modification is found at serine 479.

As to quaternary structure, homotrimer. Interacts with DAB2. Interacts with NOS3, WASL and CAV1. Interacts (via SH3 domain) with DNM2; this interaction allows the recruitment of NOS3 to dynamin-positive structures. Over-expressed in brain microcapillaries from spontaneously hypertensive rats.

It localises to the cell membrane. Its subcellular location is the cytoplasmic vesicle. The protein resides in the cytoplasm. The protein localises to the cytoskeleton. It is found in the nucleus. Functionally, multivalent adapter protein which may decrease NOS3 activity by inducing its translocation away from the plasma membrane. The polypeptide is Nostrin (Rattus norvegicus (Rat)).